The sequence spans 308 residues: Transaldolase (308 aa).

K125 acts as the Schiff-base intermediate with substrate in catalysis.

The protein belongs to the transaldolase family. Type 1 subfamily. As to quaternary structure, homodimer.

It localises to the cytoplasm. It carries out the reaction D-sedoheptulose 7-phosphate + D-glyceraldehyde 3-phosphate = D-erythrose 4-phosphate + beta-D-fructose 6-phosphate. It participates in carbohydrate degradation; pentose phosphate pathway; D-glyceraldehyde 3-phosphate and beta-D-fructose 6-phosphate from D-ribose 5-phosphate and D-xylulose 5-phosphate (non-oxidative stage): step 2/3. Transaldolase is important for the balance of metabolites in the pentose-phosphate pathway. In Ectopseudomonas mendocina (strain ymp) (Pseudomonas mendocina), this protein is Transaldolase.